Consider the following 459-residue polypeptide: Glutamate--isopropylamine ligase (459 aa).

The GS beta-grasp domain maps to histidine 19–glycine 115. The region spanning proline 122–isoleucine 459 is the GS catalytic domain.

This sequence belongs to the glutamine synthetase family.

It catalyses the reaction isopropylamine + L-glutamate + ATP = gamma-L-glutamyl-isopropylamide + ADP + phosphate + H(+). In terms of biological role, involved in the degradation of isopropylamine, which is a constituent of the herbicides atrazine. Catalyzes the ATP-dependent formation of gamma-glutamyl-isopropylamide from isopropylamine and L-glutamate. It can also use aminoalkanes, amino-alcohols (L-alaninol and D-alaninol) and amino-esters as substrates. The sequence is that of Glutamate--isopropylamine ligase (ipuC) from Pseudomonas sp.